Here is a 247-residue protein sequence, read N- to C-terminus: LOB domain-containing protein 38 (247 aa).

The 107-residue stretch at 1 to 107 folds into the LOB domain; sequence MSCNGCRVLR…VETVLRGGSL (107 aa). Low complexity predominate over residues 157–170; that stretch reads FSSSRSRSRSTASP. Positions 157-184 are disordered; sequence FSSSRSRSRSTASPPKRKRLSSEQQPSS.

The protein belongs to the LOB domain-containing protein family. Expressed in young shoots, roots, stems, leaves and flowers.

In Arabidopsis thaliana (Mouse-ear cress), this protein is LOB domain-containing protein 38 (LBD38).